The chain runs to 147 residues: MKVILLKDVKTLGKKGEVINASDGYARNYLIPKGFAEEANKTNLHIWNNKKEAERKQKLAEIEAAQKLAAELKGKEINLTVKSGENGRIFGSITGKDISDELNKKFKINIDKKKIVINNIRQLGTYDVEVKLYPEISTKIKVIIAEK.

Belongs to the bacterial ribosomal protein bL9 family.

Binds to the 23S rRNA. The protein is Large ribosomal subunit protein bL9 of Clostridium kluyveri (strain NBRC 12016).